The sequence spans 343 residues: Endoglucanase C (343 aa).

The active-site Proton donor is Glu140. Glu280 serves as the catalytic Nucleophile.

The protein belongs to the glycosyl hydrolase 5 (cellulase A) family.

The enzyme catalyses Endohydrolysis of (1-&gt;4)-beta-D-glucosidic linkages in cellulose, lichenin and cereal beta-D-glucans.. The protein operates within glycan metabolism; cellulose degradation. In terms of biological role, this enzyme catalyzes the endohydrolysis of 1,4-beta-glucosidic linkages in cellulose, lichenin and cereal beta-D-glucans. The protein is Endoglucanase C (celC) of Acetivibrio thermocellus (strain ATCC 27405 / DSM 1237 / JCM 9322 / NBRC 103400 / NCIMB 10682 / NRRL B-4536 / VPI 7372) (Clostridium thermocellum).